A 187-amino-acid chain; its full sequence is Ribosome-recycling factor (187 aa).

The protein belongs to the RRF family.

The protein resides in the cytoplasm. Responsible for the release of ribosomes from messenger RNA at the termination of protein biosynthesis. May increase the efficiency of translation by recycling ribosomes from one round of translation to another. In Bradyrhizobium sp. (strain ORS 278), this protein is Ribosome-recycling factor.